The sequence spans 619 residues: MYNILDNYEDVDDIKNMSSDELKEFASEIRKFLIDKISKTGGHLASNLGVVELTLSLHKVFNLKKDKIIWDVGHQAYVHKILTGRKDKFDSLKQFNGLSGFPKRNESIYDAFETGHSSTSISAASGIARARDLSKDNYDVIAVIGDGALTGGMALEALNDIGYKKTNVIIILNDNQMSIAKNVGSISKYLNKIRLDPKYNKLKKDVKTKLQRTNIGSEVANSIERIKGGIKQMVVSGMFFEDIGIKYLGPIDGHNIEELTSVISKAKEIKGPVILHVKTQKGKGYSYAEENPNKFHSIGKFNSKTGEALSKPKDTYSKAFGKAMVQMAENNDKIVAITAAMTDGTGLCEFSKKFPQRFFDVGISEQHAVTMAAGLAATGYKPVFAVYSTFLQRAYDQVLHDVCIQKLPVVFAIDRAGIVGEDGETHQGVFDISYLSSIPNMTIMAPKCVEELNYIMNWAVKQNYPIAVRYPKGGNDISDVLAPLKEFRHGKWEILKDGKDVAIVAVGKMVQRAMVVRDELLKYGIDCAIINATFIKPIDKDTLNRFARDNYKFVVIEDNVLHGGIGSLILEHLNDMKFKNDVLNLGFKDEFITHGNIEILYKLYDLDIEGICKRIISFK.

Residues H74 and 115-117 contribute to the thiamine diphosphate site; that span reads GHS. D146 contacts Mg(2+). Thiamine diphosphate is bound by residues 147-148, N175, Y285, and E365; that span reads GA. N175 lines the Mg(2+) pocket.

It belongs to the transketolase family. DXPS subfamily. Homodimer. The cofactor is Mg(2+). It depends on thiamine diphosphate as a cofactor.

It carries out the reaction D-glyceraldehyde 3-phosphate + pyruvate + H(+) = 1-deoxy-D-xylulose 5-phosphate + CO2. Its pathway is metabolic intermediate biosynthesis; 1-deoxy-D-xylulose 5-phosphate biosynthesis; 1-deoxy-D-xylulose 5-phosphate from D-glyceraldehyde 3-phosphate and pyruvate: step 1/1. Catalyzes the acyloin condensation reaction between C atoms 2 and 3 of pyruvate and glyceraldehyde 3-phosphate to yield 1-deoxy-D-xylulose-5-phosphate (DXP). The protein is 1-deoxy-D-xylulose-5-phosphate synthase of Clostridium acetobutylicum (strain ATCC 824 / DSM 792 / JCM 1419 / IAM 19013 / LMG 5710 / NBRC 13948 / NRRL B-527 / VKM B-1787 / 2291 / W).